A 223-amino-acid chain; its full sequence is Endonuclease V (223 aa).

Residues D35 and D103 each coordinate Mg(2+).

Belongs to the endonuclease V family. Mg(2+) is required as a cofactor.

It is found in the cytoplasm. The enzyme catalyses Endonucleolytic cleavage at apurinic or apyrimidinic sites to products with a 5'-phosphate.. Functionally, DNA repair enzyme involved in the repair of deaminated bases. Selectively cleaves double-stranded DNA at the second phosphodiester bond 3' to a deoxyinosine leaving behind the intact lesion on the nicked DNA. The protein is Endonuclease V of Salmonella paratyphi A (strain ATCC 9150 / SARB42).